Here is a 143-residue protein sequence, read N- to C-terminus: Transcriptional regulator MraZ (143 aa).

SpoVT-AbrB domains lie at 5–47 (EYKH…SLKE) and 76–119 (ACEC…SEEN).

The protein belongs to the MraZ family. As to quaternary structure, forms oligomers.

It is found in the cytoplasm. The protein localises to the nucleoid. In Caldicellulosiruptor saccharolyticus (strain ATCC 43494 / DSM 8903 / Tp8T 6331), this protein is Transcriptional regulator MraZ.